Reading from the N-terminus, the 124-residue chain is Fluoride-specific ion channel FluC (124 aa).

A run of 4 helical transmembrane segments spans residues 3-23 (VLLI…VSNL), 34-54 (IGTL…FIFI), 68-88 (LLLI…IETF), and 100-120 (ALNV…GVLI). Na(+) contacts are provided by Gly75 and Thr78.

It belongs to the fluoride channel Fluc/FEX (TC 1.A.43) family.

The protein resides in the cell inner membrane. The enzyme catalyses fluoride(in) = fluoride(out). Its activity is regulated as follows. Na(+) is not transported, but it plays an essential structural role and its presence is essential for fluoride channel function. Functionally, fluoride-specific ion channel. Important for reducing fluoride concentration in the cell, thus reducing its toxicity. This Coxiella burnetii (strain Dugway 5J108-111) protein is Fluoride-specific ion channel FluC.